We begin with the raw amino-acid sequence, 400 residues long: Transcription initiation factor IIF subunit beta (400 aa).

Residues 1 to 19 (MSSGSAGAPALSNNSTNSV) show a composition bias toward polar residues. Positions 1 to 47 (MSSGSAGAPALSNNSTNSVAKEKSGNISGDEYLSQEEEVFDGNDIEN) are disordered. Phosphoserine is present on residues Ser-28, Ser-34, and Ser-56. Over residues 33–47 (LSQEEEVFDGNDIEN) the composition is skewed to acidic residues. 2 disordered regions span residues 165–194 (QERE…VMTD) and 366–400 (TLGE…EDVV). Residues 174–189 (KQQQQKRRNNRKKFNH) are compositionally biased toward basic residues. The span at 386 to 400 (AEADLEDEIEMEDVV) shows a compositional bias: acidic residues.

This sequence belongs to the TFIIF beta subunit family. As to quaternary structure, TFIIF is composed of three different subunits: TFG1/RAP74, TFG2/RAP30 and TAF14.

The protein resides in the nucleus. In terms of biological role, TFIIF is a general transcription initiation factor that binds to RNA polymerase II. Its functions include the recruitment of RNA polymerase II to the promoter bound DNA-TBP-TFIIB complex, decreasing the affinity of RNA polymerase II for non-specific DNA, allowing for the subsequent recruitment of TFIIE and TFIIH, and facilitating RNA polymerase II elongation. In Saccharomyces cerevisiae (strain ATCC 204508 / S288c) (Baker's yeast), this protein is Transcription initiation factor IIF subunit beta (TFG2).